The chain runs to 319 residues: Acetyl-coenzyme A carboxylase carboxyl transferase subunit alpha (319 aa).

Positions Asn35–Asp296 constitute a CoA carboxyltransferase C-terminal domain.

It belongs to the AccA family. In terms of assembly, acetyl-CoA carboxylase is a heterohexamer composed of biotin carboxyl carrier protein (AccB), biotin carboxylase (AccC) and two subunits each of ACCase subunit alpha (AccA) and ACCase subunit beta (AccD).

It is found in the cytoplasm. It carries out the reaction N(6)-carboxybiotinyl-L-lysyl-[protein] + acetyl-CoA = N(6)-biotinyl-L-lysyl-[protein] + malonyl-CoA. It participates in lipid metabolism; malonyl-CoA biosynthesis; malonyl-CoA from acetyl-CoA: step 1/1. Its function is as follows. Component of the acetyl coenzyme A carboxylase (ACC) complex. First, biotin carboxylase catalyzes the carboxylation of biotin on its carrier protein (BCCP) and then the CO(2) group is transferred by the carboxyltransferase to acetyl-CoA to form malonyl-CoA. The polypeptide is Acetyl-coenzyme A carboxylase carboxyl transferase subunit alpha (Erwinia tasmaniensis (strain DSM 17950 / CFBP 7177 / CIP 109463 / NCPPB 4357 / Et1/99)).